The chain runs to 739 residues: Catalase-peroxidase (739 aa).

The interval 1–33 (MSVEHPPIGEANTEPAAGGCPVTGRLRHPLQGG) is disordered. Residues 106 to 229 (WHSAGTYRSS…LAAVQMGLIY (124 aa)) constitute a cross-link (tryptophyl-tyrosyl-methioninium (Trp-Tyr) (with M-255)). H107 (proton acceptor) is an active-site residue. Residues 113–134 (RSSDGRGGANTGQQRFAPLNSW) are disordered. The tryptophyl-tyrosyl-methioninium (Tyr-Met) (with W-106) cross-link spans 229–255 (YVNPEGPNGNPDPLAAAVDIKDTFGRM). H270 serves as a coordination point for heme b.

It belongs to the peroxidase family. Peroxidase/catalase subfamily. In terms of assembly, homodimer or homotetramer. Heme b serves as cofactor. Formation of the three residue Trp-Tyr-Met cross-link is important for the catalase, but not the peroxidase activity of the enzyme.

It carries out the reaction H2O2 + AH2 = A + 2 H2O. The enzyme catalyses 2 H2O2 = O2 + 2 H2O. Its function is as follows. Bifunctional enzyme with both catalase and broad-spectrum peroxidase activity. The chain is Catalase-peroxidase from Nocardia farcinica (strain IFM 10152).